Reading from the N-terminus, the 229-residue chain is Large ribosomal subunit protein uL1 (229 aa).

This sequence belongs to the universal ribosomal protein uL1 family. In terms of assembly, part of the 50S ribosomal subunit.

Binds directly to 23S rRNA. The L1 stalk is quite mobile in the ribosome, and is involved in E site tRNA release. Functionally, protein L1 is also a translational repressor protein, it controls the translation of the L11 operon by binding to its mRNA. The polypeptide is Large ribosomal subunit protein uL1 (Streptococcus gordonii (strain Challis / ATCC 35105 / BCRC 15272 / CH1 / DL1 / V288)).